Here is a 305-residue protein sequence, read N- to C-terminus: Dioxygenase hkm4 (305 aa).

The Fe cation site is built by histidine 140, aspartate 142, and histidine 216.

The protein belongs to the PhyH family. Fe cation is required as a cofactor.

The protein operates within secondary metabolite biosynthesis. Functionally, dioxygenase; part of the gene cluster that mediates the biosynthesis of hancockiamides, an unusual new family of N-cinnamoylated piperazines. The NRPS hkm10 and the NmrA-like reductase hkm9 are proposed to convert two molecules of L-Phe to the intermediary piperazine called xenocockiamide A. Xenocockiamide A is then converted to hancockiamide D via a series of hydroxylations and O-methylations. The tyrosinase hkm6 may catalyze an aromatic hydroxylation, then the 2-oxoglutarate-dependent Fe(II) dioxygenase hkm4 and the FAD-dependent phenol hydroxylase hkm7 may catalyze consecutive hydroxylations to install 2 more hydroxy groups, and the methyltransferase hkm8 probably catalyzes two methylations using 2 molecules of S-adenosyl-L-methionine (SAM). The NRPS hkm11 activates and transfers trans-cinnamate supplied by the PAL hkm12 to hancockiamide D and produces hancockiamide A. NRPS Hkm11 has the flexibility to tolerate the bulky hancockiamide G as a substrate and the absence of the acetyl-transferase hkm3 opens up the opportunity for hkm11 to introduce a second N-cinnamoyl moiety. The cytochrome P450 monooxygenase hkm5 catalyzes the methylenedioxy bridge formation, converting hancockiamide A into hancockiamide G. Hkm5 can also convert hancockiamide B into hancockiamide C, and hancockiamide D into hancockiamide H. The N-acetyltransferase hkm3 finally transfers an acetyl group to 1-N of piperazine, converting hancockiamide A into hancockiamide B and hancockiamide G into hancockiamide C. This is Dioxygenase hkm4 from Aspergillus hancockii.